Consider the following 132-residue polypeptide: Small ribosomal subunit protein uS8 (132 aa).

Belongs to the universal ribosomal protein uS8 family. In terms of assembly, part of the 30S ribosomal subunit. Contacts proteins S5 and S12.

Its function is as follows. One of the primary rRNA binding proteins, it binds directly to 16S rRNA central domain where it helps coordinate assembly of the platform of the 30S subunit. The sequence is that of Small ribosomal subunit protein uS8 from Caulobacter sp. (strain K31).